A 328-amino-acid polypeptide reads, in one-letter code: Phenylalanine--tRNA ligase alpha subunit (328 aa).

Glu-245 contacts Mg(2+).

The protein belongs to the class-II aminoacyl-tRNA synthetase family. Phe-tRNA synthetase alpha subunit type 1 subfamily. Tetramer of two alpha and two beta subunits. Requires Mg(2+) as cofactor.

The protein resides in the cytoplasm. The catalysed reaction is tRNA(Phe) + L-phenylalanine + ATP = L-phenylalanyl-tRNA(Phe) + AMP + diphosphate + H(+). The chain is Phenylalanine--tRNA ligase alpha subunit from Helicobacter pylori (strain HPAG1).